We begin with the raw amino-acid sequence, 1468 residues long: Potassium channel K2 (1468 aa).

Transmembrane regions (helical) follow at residues 48-68 (MIYI…YWIY), 146-165 (FNCY…WYIS), 185-209 (IYIY…IISY), 221-240 (LLID…RHFF), 246-264 (IDIY…FLNV), and 285-306 (IILG…IQGI). Positions 326–344 (YFYFSIISISTVGYGDIIP) form an intramembrane region, pore-forming. The helical transmembrane segment at 351-368 (VICIFFIFWTFIWVPIQF) threads the bilayer. Positions 804–823 (TCARTNESHKNNRLRSRRSQ) are disordered. A compositionally biased stretch (basic residues) spans 814-823 (NNRLRSRRSQ). A coiled-coil region spans residues 1141–1185 (KSNKNSNNNNKCEQIKQLNNNLTFKKNEKKTKSNKQNTNDTLERR).

The protein localises to the membrane. Its function is as follows. May be involved in transmembrane potassium transport at the subcellular level not affecting bulk potassium transport across the plasma membrane. The protein is Potassium channel K2 of Plasmodium berghei (strain Anka).